We begin with the raw amino-acid sequence, 353 residues long: Ribosome biogenesis protein BRX1 homolog (353 aa).

The disordered stretch occupies residues M1 to P50. The segment covering D34 to I47 has biased composition (basic and acidic residues). A Brix domain is found at E60–G249. Residue K160 forms a Glycyl lysine isopeptide (Lys-Gly) (interchain with G-Cter in SUMO2) linkage. S261 bears the Phosphoserine mark. K276 is modified (N6-acetyllysine). Residues K314 and K322 each participate in a glycyl lysine isopeptide (Lys-Gly) (interchain with G-Cter in SUMO2) cross-link. Residues R334–Q344 show a composition bias toward basic residues. Residues R334–K353 form a disordered region.

Belongs to the BRX1 family.

It localises to the nucleus. The protein resides in the nucleolus. In terms of biological role, required for biogenesis of the 60S ribosomal subunit. This Mus musculus (Mouse) protein is Ribosome biogenesis protein BRX1 homolog (Brix1).